Reading from the N-terminus, the 89-residue chain is Small ribosomal subunit protein uS15 (89 aa).

It belongs to the universal ribosomal protein uS15 family. Part of the 30S ribosomal subunit. Forms a bridge to the 50S subunit in the 70S ribosome, contacting the 23S rRNA.

One of the primary rRNA binding proteins, it binds directly to 16S rRNA where it helps nucleate assembly of the platform of the 30S subunit by binding and bridging several RNA helices of the 16S rRNA. In terms of biological role, forms an intersubunit bridge (bridge B4) with the 23S rRNA of the 50S subunit in the ribosome. The sequence is that of Small ribosomal subunit protein uS15 from Escherichia coli O157:H7.